The chain runs to 501 residues: ATP synthase subunit alpha (501 aa).

169–176 (GDRQTGKT) contributes to the ATP binding site.

Belongs to the ATPase alpha/beta chains family. As to quaternary structure, F-type ATPases have 2 components, CF(1) - the catalytic core - and CF(0) - the membrane proton channel. CF(1) has five subunits: alpha(3), beta(3), gamma(1), delta(1), epsilon(1). CF(0) has three main subunits: a(1), b(2) and c(9-12). The alpha and beta chains form an alternating ring which encloses part of the gamma chain. CF(1) is attached to CF(0) by a central stalk formed by the gamma and epsilon chains, while a peripheral stalk is formed by the delta and b chains.

The protein localises to the cell membrane. The enzyme catalyses ATP + H2O + 4 H(+)(in) = ADP + phosphate + 5 H(+)(out). In terms of biological role, produces ATP from ADP in the presence of a proton gradient across the membrane. The alpha chain is a regulatory subunit. The protein is ATP synthase subunit alpha of Desulforamulus reducens (strain ATCC BAA-1160 / DSM 100696 / MI-1) (Desulfotomaculum reducens).